A 625-amino-acid chain; its full sequence is pH-response transcription factor pacC/RIM101 (625 aa).

A compositionally biased stretch (low complexity) spans 1–34; that stretch reads MSSQDQQQQQQPAQTQTSTSSSSNNENATTATSS. Positions 1-35 are disordered; it reads MSSQDQQQQQQPAQTQTSTSSSSNNENATTATSSI. 3 C2H2-type zinc fingers span residues 45-70, 81-105, and 111-133; these read LLCQWEKCSERCPTPEALFDHICEKH, LTCGWNSCRTTTVKRDHITSHIRVH, and HKCEFCGKAFKRPQDLKKHVKTH. The span at 391–416 shows a compositional bias: polar residues; that stretch reads APMTATHSSHSVSSGTPALTPPSSSV. A disordered region spans residues 391 to 440; that stretch reads APMTATHSSHSVSSGTPALTPPSSSVSYTSGNSPMSSSGMSPISRHSSTS. A compositionally biased stretch (low complexity) spans 417 to 438; the sequence is SYTSGNSPMSSSGMSPISRHSS. Positions 444 to 447 match the YPX[LI] motif 1 motif; that stretch reads YPNL. Disordered stretches follow at residues 455-543 and 584-625; these read SPHH…SPSV and VKDE…DDDE. 2 stretches are compositionally biased toward polar residues: residues 461-472 and 490-514; these read TAPTSTLGTNFD and GLNSSQYRESMETSTVGSPTPSPKE. The YPX[LI] motif 2 signature appears at 615–618; that stretch reads YPVL.

The protein belongs to the pacC/RIM101 family. In terms of processing, activated by C-terminal proteolytic cleavage by signaling protease (probably palB/RIM13) at neutral to alkaline ambient pH.

Its subcellular location is the cytoplasm. It is found in the nucleus. Transcription factor that mediates regulation of both acid- and alkaline-expressed genes in response to ambient pH. At alkaline ambient pH, activates transcription of alkaline-expressed genes (including pac1 itself) and represses transcription of acid-expressed genes. The chain is pH-response transcription factor pacC/RIM101 (pac1) from Sclerotinia sclerotiorum (White mold).